Consider the following 529-residue polypeptide: Peptide chain release factor 3 (529 aa).

In terms of domain architecture, tr-type G spans 11-280 (AKRRTFAIIS…GLVEWAPAPM (270 aa)). GTP contacts are provided by residues 20 to 27 (SHPDAGKT), 88 to 92 (DTPGH), and 142 to 145 (NKLD).

It belongs to the TRAFAC class translation factor GTPase superfamily. Classic translation factor GTPase family. PrfC subfamily.

It is found in the cytoplasm. Increases the formation of ribosomal termination complexes and stimulates activities of RF-1 and RF-2. It binds guanine nucleotides and has strong preference for UGA stop codons. It may interact directly with the ribosome. The stimulation of RF-1 and RF-2 is significantly reduced by GTP and GDP, but not by GMP. This Klebsiella pneumoniae (strain 342) protein is Peptide chain release factor 3.